A 451-amino-acid chain; its full sequence is MNLEVKKIDTANARLSAKLSVENLEKRYDKIAQKIAPKVKIDGFRRGKVPLSLVKTRYQAQIEQDAQEEMIQEVLKNALKELGIENKDLIGSPNFTKFEKKDTHFEIEADIGLKPTIVLDKIKECVPSVGVEIPNEEKIDERLKQLAKDYAKFVDTDAQRKAQNDDKLTIDFEGFIDNAPFEGGKAENFSLILGSKQMLEDFEKALLGMQAGEEKEFPLTFPSQYHAEHLAGKEALFKVKLRQIQAREALEINDELAKIVLANEENATLKLLKERVEGQLFLENKARLYNEELKEKLIENLDEKIVFDLPKTIIEQEMDLLFRNALYSMQAEGVKSLQESQEKAKEKRESFRNDATKSVKITFIIDALAKEEKIGVHDNEVFQTLYYEAMMTGQNPENLIEQYRKNNMLAAVKMAMIEDRVLTYLLDKNLPKEQQEILEKMRPNAQKTQVG.

Residues 165 to 250 (DDKLTIDFEG…LRQIQAREAL (86 aa)) enclose the PPIase FKBP-type domain.

This sequence belongs to the FKBP-type PPIase family. Tig subfamily.

It localises to the cytoplasm. The enzyme catalyses [protein]-peptidylproline (omega=180) = [protein]-peptidylproline (omega=0). In terms of biological role, involved in protein export. Acts as a chaperone by maintaining the newly synthesized protein in an open conformation. Functions as a peptidyl-prolyl cis-trans isomerase. The chain is Trigger factor from Helicobacter pylori (strain Shi470).